Consider the following 180-residue polypeptide: Endoribonuclease YbeY (180 aa).

Histidine 118, histidine 122, and histidine 128 together coordinate Zn(2+).

The protein belongs to the endoribonuclease YbeY family. It depends on Zn(2+) as a cofactor.

It localises to the cytoplasm. Functionally, single strand-specific metallo-endoribonuclease involved in late-stage 70S ribosome quality control and in maturation of the 3' terminus of the 16S rRNA. The sequence is that of Endoribonuclease YbeY from Rhodococcus jostii (strain RHA1).